The sequence spans 961 residues: MSSVFADPRVKELLNLHRSPKLATEGKTPPSQVQDLVNKYSRLGSNVVSHPTRSSPEKTTDKPADSKPSIPPLKSESVMTRLTALSSNNTTQNVASLVTAIASHPATAALPKQEASQQPVIPTSVEKRAVTQPLSQQNMNKLMNAIDPQAAPLIEDQVAGKHTGTKPLLTLQQQQAISSLPTKSERESALNEIALNTAIQSAQHANMELSKAGITFPMWFFGVQNQSDLVSRSFISLAHIQQPMVMNDSLLQEHLLVSDCIAVLQGCMQTTYLQVSEQNKEYVVTIRKEVATELPATLVAMTQRVLVHAHARFQIVNTIYTHQVPEYGRIANAFSQALRCIIKEYDFYLADLSKKHYGKMQSSAERGSLSLQTLEVKTKQIHIILENVADLCSRLGVVRGCALLQQLETAVLQSSGLSVKEVFQYLLSESLKPLGRIMDRYINEAVIPDSDAADFFIRKSHSTELAEEQGKTTINTWMQMFKVDDAQVPLFLNNIKTHLCDIGRSTVLLKWKKKQYIDKGPNASGQELLLLSAEASGETTQGFRHGEETVASLVCGDGSTGDLELAHIRLYKQLIDINARVQTKVLDFFINPEYLDFRGHLQNIYAFYLVMAGDFLSCFVESAISELVLSRSVANILRIRSKFKMVIKTSSLANLPYNERMNVIVCPELFKHHLNSVLYPQTYVPDRATDSPDPKVLNLLGLQYDVTYPLNLVLTTPVMERLNLVFRHILRAKVSEIELQKAWTTLQRLRKLERVPHDKIEVYANALRSDKSPIIIFFGVAYKMLITMLDFIHSLQFQYVTILTECIAKFQDTLVNAKSLDDLVSGMSAFANGLIMSLGLVSNNVVNILDTLFNDCIVYSHHIVKTFCIISNEDDEFIRKIVTINEESREGKSGPRGVKGSERMTSLLKKREAIEMTRLIAIANSVYSLIVDNRGLIATLMTKFNKGVASYEQVIRNFDDR.

Residues 15 to 76 form a disordered region; it reads NLHRSPKLAT…KPSIPPLKSE (62 aa). Residues 43–54 are compositionally biased toward polar residues; sequence LGSNVVSHPTRS. Residues 55–65 are compositionally biased toward basic and acidic residues; it reads SPEKTTDKPAD.

Belongs to the TUBGCP family. As to quaternary structure, component of the gamma-tubulin small complex (gamma-TuSC) composed of tubulin gamma chain, gamma-tubulin complex protein 2 (GCP2) and gamma-tubulin complex protein 3 (GCP3). Interacts with tubulin gamma chain.

Its subcellular location is the cytoplasm. The protein localises to the cytoskeleton. It is found in the flagellum axoneme. It localises to the flagellum basal body. Its function is as follows. Component of the gamma-tubulin small complex (gamma-TuSC) involved in microtubule (MT) nucleation for the formation of median bodies and in the biogenesis of flagella. Gamma-TuSC may be required for the correct positioning of EB1 within the trophozoites. This is Gamma-tubulin small complex component GCP2 from Giardia intestinalis (strain ATCC 50803 / WB clone C6) (Giardia lamblia).